The sequence spans 170 residues: UPF0251 protein MA_1017 (170 aa).

It belongs to the UPF0251 family.

This Methanosarcina acetivorans (strain ATCC 35395 / DSM 2834 / JCM 12185 / C2A) protein is UPF0251 protein MA_1017.